We begin with the raw amino-acid sequence, 552 residues long: MAEKQKHDGRVKIGHYVLGDTLGVGTFGKVKIGEHQLTGHKVAVKILNRQKIRSLDVVGKIKREIQNLKLFRHPHIIKLYQVISTPTDFFMVMEYVSGGELFDYICKHGRVEEMEARRLFQQILSAVDYCHRHMVVHRDLKPENVLLDAHMNAKIADFGLSNIMSDGEFLRTSCGSPNYAAPEVISGRLYAGPEVDIWSCGVILYALLCGTLPFDDEHVPTLFKKIRGGVFYIPEYLNRSVATLLMHMLQVDPLKRATIKDIREHEWFKQDLPSYLFPEDPSYDANVIDDEAVKEVCEKFECTESEVMNSLYSGDPQDQLAVAYHLIIDNRRIMNQASEFYLASSPPSGSFMDDSAMHIPPGLKPHPERMPPLIADSPKARCPLDALNTTKPKSLAVKKAKWHLGIRSQSKPYDIMAEVYRAMKQLDFEWKVVNAYHLRVRRKNPVTGNYVKMSLQLYLVDNRSYLLDFKSIDDEVVEQRSGSSTPQRSCSAAGLHRPRSSFDSTTAESHSLSGSLTGSLTGSTLSSVSPRLGSHTMDFFEMCASLITTLAR.

The Protein kinase domain maps to 16 to 268; it reads YVLGDTLGVG…IKDIREHEWF (253 aa). ATP-binding positions include 22–30 and Lys45; that span reads LGVGTFGKV. The active-site Proton acceptor is the Asp139. A Phosphothreonine; by LKB1 and CaMKK2 modification is found at Thr172. Thr258 is modified (phosphothreonine). An AIS region spans residues 291-376; sequence EAVKEVCEKF…PERMPPLIAD (86 aa). Residue Ser377 is modified to Phosphoserine. The interval 477–521 is disordered; it reads VEQRSGSSTPQRSCSAAGLHRPRSSFDSTTAESHSLSGSLTGSLT. Residues 480 to 490 show a composition bias toward polar residues; sequence RSGSSTPQRSC. Ser491 carries the post-translational modification Phosphoserine. A compositionally biased stretch (polar residues) spans 501–510; sequence SFDSTTAESH. Residues 511–521 are compositionally biased toward low complexity; it reads SLSGSLTGSLT.

This sequence belongs to the protein kinase superfamily. CAMK Ser/Thr protein kinase family. SNF1 subfamily. AMPK is a heterotrimer of an alpha catalytic subunit (PRKAA1 or PRKAA2), a beta (PRKAB1 or PRKAB2) and a gamma non-catalytic subunits (PRKAG1, PRKAG2 or PRKAG3). Interacts with FNIP1 and FNIP2. Interacts with DUSP29. Interacts with ARF6. The phosphorylated form at Thr-172 mediated by CamKK2 interacts with ACSS2. Requires Mg(2+) as cofactor. Ubiquitinated. Post-translationally, phosphorylated at Thr-172 by STK11/LKB1 in complex with STE20-related adapter-alpha (STRADA) pseudo kinase and CAB39. Also phosphorylated at Thr-172 by CAMKK2; triggered by a rise in intracellular calcium ions, without detectable changes in the AMP/ATP ratio. CAMKK1 can also phosphorylate Thr-172, but at much lower level. Dephosphorylated by protein phosphatase 2A and 2C (PP2A and PP2C). Phosphorylated by ULK1; leading to negatively regulate AMPK activity and suggesting the existence of a regulatory feedback loop between ULK1 and AMPK. Dephosphorylated by PPM1A and PPM1B at Thr-172 (mediated by STK11/LKB1).

The protein localises to the cytoplasm. Its subcellular location is the nucleus. The enzyme catalyses L-seryl-[protein] + ATP = O-phospho-L-seryl-[protein] + ADP + H(+). It catalyses the reaction L-threonyl-[protein] + ATP = O-phospho-L-threonyl-[protein] + ADP + H(+). The catalysed reaction is L-seryl-[acetyl-CoA carboxylase] + ATP = O-phospho-L-seryl-[acetyl-CoA carboxylase] + ADP + H(+). It carries out the reaction L-seryl-[3-hydroxy-3-methylglutaryl-coenzyme A reductase] + ATP = O-phospho-L-seryl-[3-hydroxy-3-methylglutaryl-coenzyme A reductase] + ADP + H(+). Its activity is regulated as follows. Activated by phosphorylation on Thr-172. Binding of AMP to non-catalytic gamma subunit (PRKAG1, PRKAG2 or PRKAG3) results in allosteric activation, inducing phosphorylation on Thr-172. AMP-binding to gamma subunit also sustains activity by preventing dephosphorylation of Thr-172. ADP also stimulates Thr-172 phosphorylation, without stimulating already phosphorylated AMPK. ATP promotes dephosphorylation of Thr-172, rendering the enzyme inactive. Under physiological conditions AMPK mainly exists in its inactive form in complex with ATP, which is much more abundant than AMP. Selectively inhibited by compound C (6-[4-(2-Piperidin-1-yl-ethoxy)-phenyl)]-3-pyridin-4-yl-pyyrazolo[1,5-a] pyrimidine. Activated by resveratrol, a natural polyphenol present in red wine, and S17834, a synthetic polyphenol. Salicylate/aspirin directly activates kinase activity, primarily by inhibiting Thr-172 dephosphorylation. Catalytic subunit of AMP-activated protein kinase (AMPK), an energy sensor protein kinase that plays a key role in regulating cellular energy metabolism. In response to reduction of intracellular ATP levels, AMPK activates energy-producing pathways and inhibits energy-consuming processes: inhibits protein, carbohydrate and lipid biosynthesis, as well as cell growth and proliferation. AMPK acts via direct phosphorylation of metabolic enzymes, and by longer-term effects via phosphorylation of transcription regulators. Regulates lipid synthesis by phosphorylating and inactivating lipid metabolic enzymes such as ACACA, ACACB, GYS1, HMGCR and LIPE; regulates fatty acid and cholesterol synthesis by phosphorylating acetyl-CoA carboxylase (ACACA and ACACB) and hormone-sensitive lipase (LIPE) enzymes, respectively. Promotes lipolysis of lipid droplets by mediating phosphorylation of isoform 1 of CHKA (CHKalpha2). Regulates insulin-signaling and glycolysis by phosphorylating IRS1, PFKFB2 and PFKFB3. Involved in insulin receptor/INSR internalization. AMPK stimulates glucose uptake in muscle by increasing the translocation of the glucose transporter SLC2A4/GLUT4 to the plasma membrane, possibly by mediating phosphorylation of TBC1D4/AS160. Regulates transcription and chromatin structure by phosphorylating transcription regulators involved in energy metabolism such as CRTC2/TORC2, FOXO3, histone H2B, HDAC5, MEF2C, MLXIPL/ChREBP, EP300, HNF4A, p53/TP53, SREBF1, SREBF2 and PPARGC1A. Acts as a key regulator of glucose homeostasis in liver by phosphorylating CRTC2/TORC2, leading to CRTC2/TORC2 sequestration in the cytoplasm. In response to stress, phosphorylates 'Ser-36' of histone H2B (H2BS36ph), leading to promote transcription. Acts as a key regulator of cell growth and proliferation by phosphorylating FNIP1, TSC2, RPTOR, WDR24 and ATG1/ULK1: in response to nutrient limitation, negatively regulates the mTORC1 complex by phosphorylating RPTOR component of the mTORC1 complex and by phosphorylating and activating TSC2. Also phosphorylates and inhibits GATOR2 subunit WDR24 in response to nutrient limitation, leading to suppress glucose-mediated mTORC1 activation. In response to energetic stress, phosphorylates FNIP1, inactivating the non-canonical mTORC1 signaling, thereby promoting nuclear translocation of TFEB and TFE3, and inducing transcription of lysosomal or autophagy genes. In response to nutrient limitation, promotes autophagy by phosphorylating and activating ATG1/ULK1. In that process also activates WDR45/WIPI4. Phosphorylates CASP6, thereby preventing its autoprocessing and subsequent activation. AMPK also acts as a regulator of circadian rhythm by mediating phosphorylation of CRY1, leading to destabilize it. May regulate the Wnt signaling pathway by phosphorylating CTNNB1, leading to stabilize it. Also acts as a regulator of cellular polarity by remodeling the actin cytoskeleton; probably by indirectly activating myosin. Also phosphorylates CFTR, EEF2K, KLC1, NOS3 and SLC12A1. Plays an important role in the differential regulation of pro-autophagy (composed of PIK3C3, BECN1, PIK3R4 and UVRAG or ATG14) and non-autophagy (composed of PIK3C3, BECN1 and PIK3R4) complexes, in response to glucose starvation. Can inhibit the non-autophagy complex by phosphorylating PIK3C3 and can activate the pro-autophagy complex by phosphorylating BECN1. Upon glucose starvation, promotes ARF6 activation in a kinase-independent manner leading to cell migration. Upon glucose deprivation mediates the phosphorylation of ACSS2 at 'Ser-659', which exposes the nuclear localization signal of ACSS2, required for its interaction with KPNA1 and nuclear translocation. Upon stress, regulates mitochondrial fragmentation through phosphorylation of MTFR1L. The sequence is that of 5'-AMP-activated protein kinase catalytic subunit alpha-2 (PRKAA2) from Pongo abelii (Sumatran orangutan).